The primary structure comprises 337 residues: 4-hydroxy-2-oxovalerate aldolase (337 aa).

In terms of domain architecture, Pyruvate carboxyltransferase spans 6–256 (IRIMDTTLRD…ETGIDLFQIM (251 aa)). 14–15 (RD) is a substrate binding site. D15 contacts Mn(2+). The active-site Proton acceptor is the H18. Residues S168 and H195 each contribute to the substrate site. Mn(2+) contacts are provided by H195 and H197. Y286 contributes to the substrate binding site.

This sequence belongs to the 4-hydroxy-2-oxovalerate aldolase family.

It carries out the reaction (S)-4-hydroxy-2-oxopentanoate = acetaldehyde + pyruvate. In Geobacillus genomosp. 3, this protein is 4-hydroxy-2-oxovalerate aldolase (nahM).